We begin with the raw amino-acid sequence, 463 residues long: tRNA modification GTPase MnmE (463 aa).

(6S)-5-formyl-5,6,7,8-tetrahydrofolate contacts are provided by R30, E92, and R132. The TrmE-type G domain occupies 227-386; sequence GLRVALVGRP…LVQAVLERCG (160 aa). N237 is a K(+) binding site. GTP-binding positions include 237-242, 256-262, 281-284, and 342-345; these read NVGKSS, TDLPGTT, DTAG, and NKAD. Residue S241 coordinates Mg(2+). Residues T256, L258, and T261 each coordinate K(+). T262 contributes to the Mg(2+) binding site. K463 is a (6S)-5-formyl-5,6,7,8-tetrahydrofolate binding site.

The protein belongs to the TRAFAC class TrmE-Era-EngA-EngB-Septin-like GTPase superfamily. TrmE GTPase family. Homodimer. Heterotetramer of two MnmE and two MnmG subunits. The cofactor is K(+).

It localises to the cytoplasm. Exhibits a very high intrinsic GTPase hydrolysis rate. Involved in the addition of a carboxymethylaminomethyl (cmnm) group at the wobble position (U34) of certain tRNAs, forming tRNA-cmnm(5)s(2)U34. This is tRNA modification GTPase MnmE from Synechococcus sp. (strain CC9311).